Consider the following 658-residue polypeptide: Non-reducing end beta-L-arabinofuranosidase (658 aa).

Beta-L-arabinofuranose contacts are provided by residues H142, 192-194, H270, and E322; that span reads DGH. Residue E322 is the Proton donor/acceptor of the active site. The Zn(2+) site is built by E338, C340, C417, and C418. The Nucleophile; S-glycosyl-cysteine intermediate role is filled by C417.

The protein belongs to the glycosyl hydrolase 127 family. Homodimer in solution. Zn(2+) is required as a cofactor.

It catalyses the reaction beta-L-arabinofuranosyl-(1-&gt;2)-beta-L-arabinofuranose + H2O = 2 beta-L-arabinofuranose. With respect to regulation, strongly inhibited in the presence of thiol modifiers, suggesting a crucial role for cysteine residues in catalysis. Slightly inhibited by EDTA. Functionally, beta-L-arabinofuranosidase that removes the beta-L-arabinofuranose residue from the non-reducing end of various substrates, including beta-L-arabinofuranosyl-hydroxyproline (Ara-Hyp), Ara-beta-1,2-Ara-beta-Hyp (Ara(2)-Hyp), Ara-beta-1,2-Ara-beta-1,2-Ara-beta-Hyp (Ara(3)-Hyp), and beta-L-arabinofuranosyl-(1-&gt;2)-1-O-methyl-beta-L-arabinofuranose. In the presence of 1-alkanols, shows transglycosylation activity, retaining the anomeric configuration of the arabinofuranose residue. In Bifidobacterium longum subsp. longum (strain ATCC 15707 / DSM 20219 / JCM 1217 / NCTC 11818 / E194b), this protein is Non-reducing end beta-L-arabinofuranosidase.